We begin with the raw amino-acid sequence, 460 residues long: Protein btn1 (460 aa).

A run of 11 helical transmembrane segments spans residues 42 to 62 (VCVA…VILS), 76 to 96 (VVLL…PYFI), 105 to 125 (IIIF…SPPY), 135 to 155 (LAGI…FVGL), 164 to 184 (LAAW…AYAL), 195 to 215 (ATLL…FMVL), 287 to 307 (GLFF…YTIN), 323 to 343 (FAHF…GVFI), 356 to 376 (LYLP…QAVF), 378 to 398 (FIPS…LGGL), and 428 to 448 (AAGI…LCDW).

This sequence belongs to the battenin family.

Its subcellular location is the vacuole membrane. In terms of biological role, involved in vacuolar transport and vacuole pH homeostasis. Also required for cytokinesis. In Aspergillus fumigatus (strain ATCC MYA-4609 / CBS 101355 / FGSC A1100 / Af293) (Neosartorya fumigata), this protein is Protein btn1 (btn1).